A 68-amino-acid polypeptide reads, in one-letter code: ISHGFRYDAIAKLFRPFFCGDGYGHRIGETVYYAGSLKYCARSFDVGAEIICKGFYYFGIYKRRVSEV.

The residue at position 66 (Ser66) is a Phosphoserine.

This Cavia porcellus (Guinea pig) protein is Erythrodihydroneopterin triphosphate synthetase.